A 127-amino-acid chain; its full sequence is Ribosome-binding factor A (127 aa).

It belongs to the RbfA family. As to quaternary structure, monomer. Binds 30S ribosomal subunits, but not 50S ribosomal subunits or 70S ribosomes.

Its subcellular location is the cytoplasm. Functionally, one of several proteins that assist in the late maturation steps of the functional core of the 30S ribosomal subunit. Associates with free 30S ribosomal subunits (but not with 30S subunits that are part of 70S ribosomes or polysomes). Required for efficient processing of 16S rRNA. May interact with the 5'-terminal helix region of 16S rRNA. The chain is Ribosome-binding factor A from Aromatoleum aromaticum (strain DSM 19018 / LMG 30748 / EbN1) (Azoarcus sp. (strain EbN1)).